We begin with the raw amino-acid sequence, 117 residues long: Con-Ins T3 (117 aa).

A signal peptide spans 1–24; the sequence is MTTSFYFLLMALGLLLYVCQSSFG. The propeptide occupies 25-29; it reads NQHTR. Residue Pro-34 is modified to 4-hydroxyproline; partial. 3 disulfides stabilise this stretch: Cys-38–Cys-101, Cys-50–Cys-114, and Cys-100–Cys-105. A propeptide spans 53–94 (c peptide); sequence KRNDAGKKRGQASPLWQRGGSLSMLKARAKRNEAFHLQRAHR. Glu-98 is subject to 4-carboxyglutamate. Glu-109 bears the 4-carboxyglutamate; partial mark. Position 114 is a cysteine amide (Cys-114). Positions 116 to 117 are excised as a propeptide; it reads NS.

Belongs to the insulin family. As to quaternary structure, heterodimer of A and B chains; disulfide-linked. Expressed by the venom gland.

Its subcellular location is the secreted. This venom insulin facilitates prey capture by rapidly inducing hypoglycemic shock. It is one of the smallest known insulin found in nature and lacks the C-terminal segment of the B chain that, in human insulin, mediates engagement of the insulin receptor (INSR) and assembly of the hormone's hexameric storage form. Despite lacking this segment, it both binds and activates human insulin receptor (long isoform (HIR-B) OF INSR) with only a 10-fold lower potency. In vivo, intraperitoneal injection of this peptide into zebrafish lowers blood glucose with the same potency than human insulin. In addition, when applied to water, this peptide reduces overall locomotor activity of zebrafish larvae, observed as a significant decrease in the percentage of time spent swimming and movement frequency. This is Con-Ins T3 from Conus tulipa (Fish-hunting cone snail).